We begin with the raw amino-acid sequence, 2389 residues long: Highly reducing polyketide synthase Dhc3 (2389 aa).

The Ketosynthase family 3 (KS3) domain occupies 9–433 (DVPIAVVGLA…GTNGHAVLES (425 aa)). Active-site for beta-ketoacyl synthase activity residues include C181, H316, and H356. The tract at residues 551–861 (FVFTGQGAQW…LSGPVEQILN (311 aa)) is malonyl-CoA:ACP transacylase (MAT) domain. The active-site For malonyltransferase activity is S641. The interval 944 to 1079 (RSLIGAQVPM…GLITIDYADT (136 aa)) is N-terminal hotdog fold. Positions 944–1263 (RSLIGAQVPM…VSELENDTEA (320 aa)) constitute a PKS/mFAS DH domain. The dehydratase (DH) domain stretch occupies residues 946-1262 (LIGAQVPMMD…RVSELENDTE (317 aa)). Residue H976 is the Proton acceptor; for dehydratase activity of the active site. The C-terminal hotdog fold stretch occupies residues 1107–1263 (PDICSKEDFY…VSELENDTEA (157 aa)). The Proton donor; for dehydratase activity role is filled by D1173. Residues 1673–1987 (GLLDTLAFIE…QGKHRGKLVL (315 aa)) form an enoylreductase (ER) domain region. Residues 2011–2191 (ATYLFVGGLG…VAVDLGIMRD (181 aa)) form a catalytic ketoreductase (KRc) domain region. The Carrier domain maps to 2302–2379 (EAVSIITDAL…EFAEKIAEKS (78 aa)). S2339 bears the O-(pantetheine 4'-phosphoryl)serine mark.

Its pathway is mycotoxin biosynthesis. Functionally, highly reducing polyketide synthase; part of the gene cluster that mediates the biosynthesis of 10,11-dehydrocurvularin, a prevalent fungal phytotoxin with heat shock response and immune-modulatory activities. The highly reducing polyketide synthase Dhc3 is responsible for biosynthesis up to the tetraketide stage. The non-reducing polyketide synthase Dhc5 then conducts four additional chain extension cycles, producing the unreduced part of the nascent octaketide from C-1 to C-8 in 10,11-dehydrocurvularin. This is Highly reducing polyketide synthase Dhc3 (Dhc3) from Alternaria cinerariae.